The chain runs to 126 residues: Acidic phospholipase A2 2 (126 aa).

Residues 1-7 constitute a propeptide that is removed on maturation; the sequence is SNRPMPL. 7 disulfides stabilise this stretch: C18-C78, C33-C125, C35-C51, C50-C106, C57-C99, C67-C92, and C85-C97. Positions 34, 36, and 38 each coordinate Ca(2+). H54 is an active-site residue. A Ca(2+)-binding site is contributed by D55. Residue D100 is part of the active site.

This sequence belongs to the phospholipase A2 family. Group I subfamily. D49 sub-subfamily. Heterodimer formed between two homologous isoforms: isoform 1 and isoform 2. The cofactor is Ca(2+). As to expression, expressed by the venom gland.

It is found in the secreted. The catalysed reaction is a 1,2-diacyl-sn-glycero-3-phosphocholine + H2O = a 1-acyl-sn-glycero-3-phosphocholine + a fatty acid + H(+). Functionally, PLA2 catalyzes the calcium-dependent hydrolysis of the 2-acyl groups in 3-sn-phosphoglycerides. This Naja sagittifera (Andaman cobra) protein is Acidic phospholipase A2 2.